An 820-amino-acid polypeptide reads, in one-letter code: Trimethylamine-N-oxide reductase (820 aa).

Positions 1 to 33 form a signal peptide, tat-type signal; that stretch reads MAITRRSFLKGVATTSAASIIGPSLLTSVSAQA. Residue serine 179 coordinates Mo-bis(molybdopterin guanine dinucleotide).

The protein belongs to the prokaryotic molybdopterin-containing oxidoreductase family. Mo-bis(molybdopterin guanine dinucleotide) serves as cofactor. Post-translationally, predicted to be exported by the Tat system. The position of the signal peptide cleavage has not been experimentally proven.

Its subcellular location is the periplasm. It catalyses the reaction trimethylamine + 2 Fe(III)-[cytochrome c] + H2O = trimethylamine N-oxide + 2 Fe(II)-[cytochrome c] + 3 H(+). Reduces trimethylamine-N-oxide (TMAO) into trimethylamine; an anaerobic reaction coupled to energy-yielding reactions. This chain is Trimethylamine-N-oxide reductase (torA), found in Vibrio cholerae serotype O1 (strain ATCC 39315 / El Tor Inaba N16961).